The following is an 87-amino-acid chain: Small ribosomal subunit protein bS20 (87 aa).

Belongs to the bacterial ribosomal protein bS20 family.

Its function is as follows. Binds directly to 16S ribosomal RNA. This Corynebacterium diphtheriae (strain ATCC 700971 / NCTC 13129 / Biotype gravis) protein is Small ribosomal subunit protein bS20.